The chain runs to 406 residues: Putative gustatory receptor 59f (406 aa).

Over 1-36 (MRSSATKGAKLKNSPRERLSSFNPQYAERYKELYRT) the chain is Cytoplasmic. The chain crosses the membrane as a helical span at residues 37-57 (LFWLLLISVLANTAPITILPG). Residues 58-69 (CPNRFYRLVHLS) are Extracellular-facing. Residues 70-90 (WMILWYGLFVLGSYWEFVLVT) traverse the membrane as a helical segment. Topologically, residues 91–99 (TQRVSLDRY) are cytoplasmic. A helical transmembrane segment spans residues 100 to 120 (LNAIESAIYVVHIFSIMLLTW). Residues 121–154 (QCRNWAPKLMTNIVTSDLNRAYTIDCNRTKRFIR) lie on the Extracellular side of the membrane. An N-linked (GlcNAc...) asparagine glycan is attached at N147. Residues 155 to 175 (LQLFLVGIFACLAIFFNIWTH) form a helical membrane-spanning segment. Residues 176–189 (KFVVYRSILSINSY) are Cytoplasmic-facing. The helical transmembrane segment at 190-210 (VMPNIISSISFAQYYLLLQGI) threads the bilayer. At 211–259 (AWRQRRLTEGLERELTHLHSPRISEVQKIRMHHANLIDFTKAVNRTFQY) the chain is on the extracellular side. A glycan (N-linked (GlcNAc...) asparagine) is linked at N254. The chain crosses the membrane as a helical span at residues 260-280 (SILLLFVGCFLNFNLVLFLVY). The Cytoplasmic portion of the chain corresponds to 281–364 (QGIENPSMAD…RQHVVCGVIN (84 aa)). Residues 365-385 (LDLKFLTTLLVASADFFIFLL) form a helical membrane-spanning segment. Residues 386–406 (QYDVTYEALSKSVQGNVTRYK) are Extracellular-facing. An N-linked (GlcNAc...) asparagine glycan is attached at N401.

The protein belongs to the insect chemoreceptor superfamily. Gustatory receptor (GR) family. Gr10a subfamily. As to expression, expressed in the adult abdomen and wing. In larvae, is expressed in neurons of the terminal external chemosensory organ.

It is found in the cell membrane. Probable gustatory receptor which mediates acceptance or avoidance behavior, depending on its substrates. In Drosophila melanogaster (Fruit fly), this protein is Putative gustatory receptor 59f (Gr59f).